Here is a 335-residue protein sequence, read N- to C-terminus: Dihydroorotate dehydrogenase (quinone) (335 aa).

FMN-binding positions include 59-63 (AGLDK) and threonine 83. A substrate-binding site is contributed by lysine 63. 108–112 (NRMGF) contributes to the substrate binding site. FMN contacts are provided by asparagine 136 and asparagine 169. Asparagine 169 lines the substrate pocket. The Nucleophile role is filled by serine 172. Asparagine 174 contacts substrate. Positions 214 and 242 each coordinate FMN. Residue 243-244 (NT) coordinates substrate. Residues glycine 265, glycine 294, and 315 to 316 (YS) each bind FMN.

It belongs to the dihydroorotate dehydrogenase family. Type 2 subfamily. As to quaternary structure, monomer. The cofactor is FMN.

It is found in the cell membrane. It catalyses the reaction (S)-dihydroorotate + a quinone = orotate + a quinol. It functions in the pathway pyrimidine metabolism; UMP biosynthesis via de novo pathway; orotate from (S)-dihydroorotate (quinone route): step 1/1. Functionally, catalyzes the conversion of dihydroorotate to orotate with quinone as electron acceptor. This Neisseria gonorrhoeae (strain ATCC 700825 / FA 1090) protein is Dihydroorotate dehydrogenase (quinone).